The chain runs to 80 residues: Defensin-like protein CAL1 (80 aa).

Residues methionine 1 to alanine 31 form the signal peptide. Cystine bridges form between cysteine 34–cysteine 80, cysteine 45–cysteine 65, cysteine 51–cysteine 74, and cysteine 55–cysteine 76.

Belongs to the DEFL family. In terms of tissue distribution, expressed preferentially in root exodermis and xylem parenchyma cells in vasculature of root and flag leaf sheath.

It localises to the secreted. Its subcellular location is the extracellular space. Plant defensin-like protein involved in accumulation of cadmium (Cd) in rice leaves. Mediates Cd efflux from cytosol into extracellular spaces via chelation. This drives Cd secretion from xylem parenchyma cells into the xylem vessels, hence lowering Cd levels in cytosol meanwhile promoting Cd translocation from roots to shoots. This is Defensin-like protein CAL1 from Oryza sativa subsp. japonica (Rice).